Here is a 3051-residue protein sequence, read N- to C-terminus: Biorientation of chromosomes in cell division protein 1-like 1 (3051 aa).

Over residues 1 to 33 (MATNPQPQPPPPAPPPPPPQPQPQPPPPPPGPG) the composition is skewed to pro residues. 5 disordered regions span residues 1–47 (MATN…AGAG), 164–197 (HKEEGSGNTAPDDEKPDTSLITQGVPTPGPSANV), 215–288 (ASAA…CPVE), 301–393 (ILLN…KEDF), and 411–469 (VHTS…VRHA). The span at 34–47 (AGPGAGGAGGAGAG) shows a compositional bias: gly residues. The segment covering 215-227 (ASAARASTETSNA) has biased composition (low complexity). A compositionally biased stretch (basic and acidic residues) spans 246–263 (STDKERTSEDMADKEKST). Residue serine 266 is modified to Phosphoserine. Over residues 312–393 (SEQKNKSTDK…KTVEGTKEDF (82 aa)) the composition is skewed to basic and acidic residues. Over residues 418–443 (SFEEDTEEEVVTSDSMEEGEITSDDE) the composition is skewed to acidic residues. Lysine 473 is modified (N6-acetyllysine). Serine 482 and serine 484 each carry phosphoserine. 3 stretches are compositionally biased toward basic and acidic residues: residues 497–527 (IAKEKEERLLRRQINREKLEEKRKQKAEKTK), 549–570 (LEPKAARIKEVLKERKVLEKKV), and 580–653 (SRNV…LERE). The disordered stretch occupies residues 497-1203 (IAKEKEERLL…EKHADHRSTL (707 aa)). A phosphoserine mark is found at serine 635 and serine 659. Phosphothreonine is present on residues threonine 660 and threonine 733. 6 stretches are compositionally biased toward basic and acidic residues: residues 671–772 (TDTR…EENI), 804–852 (KDGK…KIQK), 866–878 (RRSESYSEDKCDM), 940–966 (KPDKEKNTEENDSEKQRKSKVEDKPFE), 984–1021 (TQKDSSHRAKLPLAKEKYKSDKDSTSTRLERKLSDGHK), and 1028–1075 (SSKD…ENRR). The residue at position 1077 (serine 1077) is a Phosphoserine. Composition is skewed to polar residues over residues 1092–1103 (NTLSTPSGSSLQ) and 1135–1148 (SKTQDNRNNNSQQD). Phosphoserine occurs at positions 1145 and 1318. Threonine 1354 carries the phosphothreonine modification. Disordered regions lie at residues 1456-1550 (KLKH…QSEV), 1700-1725 (GSISSEEVDGSQGNMMRMGPKKETEG), and 1760-1890 (VVLG…TGLG). Basic and acidic residues predominate over residues 1465–1479 (KVKDISIDVERRNEN). Over residues 1482-1504 (VDTSAGSGSAPSVLHQRNGQTED) the composition is skewed to polar residues. Serine 1531, serine 1701, and serine 1710 each carry phosphoserine. 4 positions are modified to phosphoserine: serine 2013, serine 2025, serine 2128, and serine 2203. Disordered regions lie at residues 2189–2210 (DFEGPMPSAPPEAESPLASTSK), 2258–2285 (TSSVEDCEGPVSSAVPQEEGDPSVTPAE), 2403–2447 (STEE…FAGR), 2472–2519 (EDKS…AKDP), 2615–2635 (DQASAEKTGDDNSTRKSFPEE), and 2717–3051 (VENS…KAKR). Low complexity predominate over residues 2191 to 2207 (EGPMPSAPPEAESPLAS). Basic and acidic residues predominate over residues 2428-2439 (AEKEEKHGKECP). At serine 2475 the chain carries Phosphoserine. Over residues 2483–2492 (GSSTASYSAG) the composition is skewed to low complexity. 2 positions are modified to phosphoserine: serine 2501 and serine 2618. 3 stretches are compositionally biased toward basic and acidic residues: residues 2621-2633 (KTGDDNSTRKSFP), 2724-2746 (TNEEIHSESYNKGEISSGRKDNA), and 2754-2767 (VEADPKEVEEEERH). Residues 2780–2789 (SEDEPDDNPD) are compositionally biased toward acidic residues. The span at 2791 to 2822 (LDSRIETAQRQCPETEPHDTKEENSRDLEELP) shows a compositional bias: basic and acidic residues. Polar residues predominate over residues 2823 to 2834 (KTSSETNSTTSR). The span at 2848–2864 (TGEKPEQNDDDTIKSQE) shows a compositional bias: basic and acidic residues. Positions 2871–2880 (IKRKRGRPRK) are enriched in basic residues. Positions 2872 to 2884 (KRKRGRPRKYPVE) form a DNA-binding region, a.T hook. Polar residues predominate over residues 2896–2910 (DTGIVTVEQSPSSSK). Phosphoserine occurs at positions 2905 and 2907. Basic residues predominate over residues 2944 to 2953 (VRRRGRKPKR). The residue at position 2954 (serine 2954) is a Phosphoserine. Threonine 2956 bears the Phosphothreonine mark. A phosphoserine mark is found at serine 2958, serine 2964, and serine 2973. Glycyl lysine isopeptide (Lys-Gly) (interchain with G-Cter in ubiquitin) cross-links involve residues lysine 2981 and lysine 2982. Acidic residues predominate over residues 2985–2998 (ESDEEEEEEEEDEP). Residues serine 2986 and serine 3019 each carry the phosphoserine modification. The span at 3000-3020 (GATTRSTTRSEAQRSKTQLSP) shows a compositional bias: polar residues. Over residues 3039–3051 (QRVEEAPVKKAKR) the composition is skewed to basic and acidic residues.

The protein belongs to the BOD1 family. Interacts (via COMPASS-Shg1 domain) with SETD1A at stalled replication forks; this interaction mediates FANCD2-dependent nucleosome remodeling at reversed forks protecting them from nucleolytic degradation.

Its subcellular location is the chromosome. Its function is as follows. Component of the fork protection machinery required to protect stalled/damaged replication forks from uncontrolled DNA2-dependent resection. Acts by stabilizing RAD51 at stalled replication forks and protecting RAD51 nucleofilaments from the antirecombinogenic activities of FBH1 and BLM. Does not regulate spindle orientation. This chain is Biorientation of chromosomes in cell division protein 1-like 1, found in Homo sapiens (Human).